The sequence spans 418 residues: Serine/threonine transporter SstT (418 aa).

8 consecutive transmembrane segments (helical) span residues Ile21–Ala41, Phe49–Ile69, Ile83–Phe103, Ala142–Leu162, Phe190–Ala210, Leu217–Val237, Met299–Ile319, and Val331–Ile351.

The protein belongs to the dicarboxylate/amino acid:cation symporter (DAACS) (TC 2.A.23) family.

It is found in the cell inner membrane. The catalysed reaction is L-serine(in) + Na(+)(in) = L-serine(out) + Na(+)(out). It carries out the reaction L-threonine(in) + Na(+)(in) = L-threonine(out) + Na(+)(out). Its function is as follows. Involved in the import of serine and threonine into the cell, with the concomitant import of sodium (symport system). The protein is Serine/threonine transporter SstT of Yersinia pestis bv. Antiqua (strain Antiqua).